The chain runs to 59 residues: UPF0434 protein Rsph17029_0141 (59 aa).

The protein belongs to the UPF0434 family.

In Cereibacter sphaeroides (strain ATCC 17029 / ATH 2.4.9) (Rhodobacter sphaeroides), this protein is UPF0434 protein Rsph17029_0141.